A 289-amino-acid chain; its full sequence is Shikimate dehydrogenase (NADP(+)) (289 aa).

Residues serine 19–serine 21 and threonine 66 each bind shikimate. Lysine 70 (proton acceptor) is an active-site residue. Positions 91 and 106 each coordinate shikimate. NADP(+) contacts are provided by residues glycine 131–alanine 135 and leucine 229. Tyrosine 231 lines the shikimate pocket. Glycine 252 is a binding site for NADP(+).

It belongs to the shikimate dehydrogenase family. Homodimer.

The enzyme catalyses shikimate + NADP(+) = 3-dehydroshikimate + NADPH + H(+). It functions in the pathway metabolic intermediate biosynthesis; chorismate biosynthesis; chorismate from D-erythrose 4-phosphate and phosphoenolpyruvate: step 4/7. Functionally, involved in the biosynthesis of the chorismate, which leads to the biosynthesis of aromatic amino acids. Catalyzes the reversible NADPH linked reduction of 3-dehydroshikimate (DHSA) to yield shikimate (SA). The chain is Shikimate dehydrogenase (NADP(+)) from Trichormus variabilis (strain ATCC 29413 / PCC 7937) (Anabaena variabilis).